A 631-amino-acid polypeptide reads, in one-letter code: Phosphomethylpyrimidine synthase (631 aa).

Substrate contacts are provided by residues asparagine 239, methionine 268, tyrosine 297, histidine 333, 353–355 (SRG), 394–397 (DGLR), and glutamate 433. Histidine 437 is a Zn(2+) binding site. A substrate-binding site is contributed by tyrosine 460. Histidine 501 lines the Zn(2+) pocket. Positions 581, 584, and 589 each coordinate [4Fe-4S] cluster.

This sequence belongs to the ThiC family. As to quaternary structure, homodimer. Requires [4Fe-4S] cluster as cofactor.

The enzyme catalyses 5-amino-1-(5-phospho-beta-D-ribosyl)imidazole + S-adenosyl-L-methionine = 4-amino-2-methyl-5-(phosphooxymethyl)pyrimidine + CO + 5'-deoxyadenosine + formate + L-methionine + 3 H(+). It participates in cofactor biosynthesis; thiamine diphosphate biosynthesis. Functionally, catalyzes the synthesis of the hydroxymethylpyrimidine phosphate (HMP-P) moiety of thiamine from aminoimidazole ribotide (AIR) in a radical S-adenosyl-L-methionine (SAM)-dependent reaction. In Salmonella heidelberg (strain SL476), this protein is Phosphomethylpyrimidine synthase.